A 364-amino-acid chain; its full sequence is Histidinol-phosphate aminotransferase (364 aa).

Position 225 is an N6-(pyridoxal phosphate)lysine (Lys-225).

This sequence belongs to the class-II pyridoxal-phosphate-dependent aminotransferase family. Histidinol-phosphate aminotransferase subfamily. Homodimer. The cofactor is pyridoxal 5'-phosphate.

The catalysed reaction is L-histidinol phosphate + 2-oxoglutarate = 3-(imidazol-4-yl)-2-oxopropyl phosphate + L-glutamate. It participates in amino-acid biosynthesis; L-histidine biosynthesis; L-histidine from 5-phospho-alpha-D-ribose 1-diphosphate: step 7/9. In Sulfurovum sp. (strain NBC37-1), this protein is Histidinol-phosphate aminotransferase.